The following is a 101-amino-acid chain: uncharacterized protein (101 aa).

Residues 39-74 are disordered; sequence CDERHGRPLPHSQESQHGSATSKKAVRGTADTAPLE. Positions 50–60 are enriched in polar residues; the sequence is SQESQHGSATS.

This is an uncharacterized protein from Homo sapiens (Human).